The primary structure comprises 264 residues: 3-methyl-2-oxobutanoate hydroxymethyltransferase (264 aa).

Mg(2+) is bound by residues Asp-45 and Asp-84. 3-methyl-2-oxobutanoate-binding positions include 45 to 46, Asp-84, and Lys-112; that span reads DS. Glu-114 contributes to the Mg(2+) binding site. Catalysis depends on Glu-181, which acts as the Proton acceptor.

It belongs to the PanB family. In terms of assembly, homodecamer; pentamer of dimers. The cofactor is Mg(2+).

It localises to the cytoplasm. The enzyme catalyses 3-methyl-2-oxobutanoate + (6R)-5,10-methylene-5,6,7,8-tetrahydrofolate + H2O = 2-dehydropantoate + (6S)-5,6,7,8-tetrahydrofolate. Its pathway is cofactor biosynthesis; (R)-pantothenate biosynthesis; (R)-pantoate from 3-methyl-2-oxobutanoate: step 1/2. Functionally, catalyzes the reversible reaction in which hydroxymethyl group from 5,10-methylenetetrahydrofolate is transferred onto alpha-ketoisovalerate to form ketopantoate. The polypeptide is 3-methyl-2-oxobutanoate hydroxymethyltransferase (Aeromonas salmonicida (strain A449)).